We begin with the raw amino-acid sequence, 400 residues long: MNIYLVGGAVRDQLLHLPVKDRDWLVVGSTPDELLSLGYLQVGKDFPVFIHPETHEEYALARTEKKSGSGYTGFICDFSPDITLEDDLIRRDLTINAIAQDKNGKLYDPYHGIEDLNNRLLRHISPSFEEDPLRVLRVARFAAKFYHLGFAIAPETLELMKKLSTQGELQHLTAERVWLETEKALMTENPEIYFQTLLKIDALPALMPELATISVENFQYAMTALKNAVSLIKNMDCNKSAVCFATIFLGIIYVNPSHMTQKQQEQDNHQKNITPCLFEKLKVPAYHKELAILAGKYHIYIHNAFNLKSHTIIDLFNKWDVWRKPQRFLELLIVCAAHYSAQSKNQPTYPQKSYLLGLYQKAMTIDVKNIVSAGFKKTEIRNELTRQRISAVEKIKNCYP.

Residues Gly-8 and Arg-11 each coordinate ATP. CTP contacts are provided by Gly-8 and Arg-11. Residues Asp-21 and Asp-23 each coordinate Mg(2+). ATP is bound by residues Arg-91, Arg-137, and Arg-140. CTP is bound by residues Arg-91, Arg-137, and Arg-140. Positions 217–322 constitute an HD domain; it reads NFQYAMTALK…IDLFNKWDVW (106 aa).

It belongs to the tRNA nucleotidyltransferase/poly(A) polymerase family. Bacterial CCA-adding enzyme type 2 subfamily. Requires Mg(2+) as cofactor.

It catalyses the reaction a tRNA precursor + 2 CTP + ATP = a tRNA with a 3' CCA end + 3 diphosphate. It carries out the reaction a tRNA with a 3' CCA end + 2 CTP + ATP = a tRNA with a 3' CCACCA end + 3 diphosphate. Functionally, catalyzes the addition and repair of the essential 3'-terminal CCA sequence in tRNAs without using a nucleic acid template. Adds these three nucleotides in the order of C, C, and A to the tRNA nucleotide-73, using CTP and ATP as substrates and producing inorganic pyrophosphate. tRNA 3'-terminal CCA addition is required both for tRNA processing and repair. Also involved in tRNA surveillance by mediating tandem CCA addition to generate a CCACCA at the 3' terminus of unstable tRNAs. While stable tRNAs receive only 3'-terminal CCA, unstable tRNAs are marked with CCACCA and rapidly degraded. The sequence is that of CCA-adding enzyme from Actinobacillus succinogenes (strain ATCC 55618 / DSM 22257 / CCUG 43843 / 130Z).